The sequence spans 108 residues: UPF0102 protein Shewana3_3881 (108 aa).

The protein belongs to the UPF0102 family.

The protein is UPF0102 protein Shewana3_3881 of Shewanella sp. (strain ANA-3).